The chain runs to 160 residues: Cyclic pyranopterin monophosphate synthase (160 aa).

Substrate-binding positions include 74–76 (LSH) and 112–113 (ME). Asp127 is a catalytic residue.

The protein belongs to the MoaC family. In terms of assembly, homohexamer; trimer of dimers.

It carries out the reaction (8S)-3',8-cyclo-7,8-dihydroguanosine 5'-triphosphate = cyclic pyranopterin phosphate + diphosphate. Its pathway is cofactor biosynthesis; molybdopterin biosynthesis. Functionally, catalyzes the conversion of (8S)-3',8-cyclo-7,8-dihydroguanosine 5'-triphosphate to cyclic pyranopterin monophosphate (cPMP). The chain is Cyclic pyranopterin monophosphate synthase from Geobacter metallireducens (strain ATCC 53774 / DSM 7210 / GS-15).